The following is a 40-amino-acid chain: Sulfur globule protein TR2 (40 aa).

The protein to C.vinosum CV3. In terms of assembly, the protein envelope of the sulfur globules is composed of the three different proteins TR0, TR1 and TR2.

Structural protein of the sulfur globules, which are intracellular globules that serve for sulfur storage in purple sulfur bacteria. This chain is Sulfur globule protein TR2, found in Thiocapsa roseopersicina.